The following is a 259-amino-acid chain: Phosphate import ATP-binding protein PstB (259 aa).

The region spanning 11–254 (AESKNLNFYY…PDNPRTEDYI (244 aa)) is the ABC transporter domain. 43–50 (GPSGCGKS) contributes to the ATP binding site.

Belongs to the ABC transporter superfamily. Phosphate importer (TC 3.A.1.7) family. As to quaternary structure, the complex is composed of two ATP-binding proteins (PstB), two transmembrane proteins (PstC and PstA) and a solute-binding protein (PstS).

The protein resides in the cell inner membrane. It carries out the reaction phosphate(out) + ATP + H2O = ADP + 2 phosphate(in) + H(+). In terms of biological role, part of the ABC transporter complex PstSACB involved in phosphate import. Responsible for energy coupling to the transport system. The polypeptide is Phosphate import ATP-binding protein PstB (Geobacter sulfurreducens (strain ATCC 51573 / DSM 12127 / PCA)).